The primary structure comprises 687 residues: Dictomallein (687 aa).

2 disordered regions span residues 1–45 (MGNG…SRRL) and 73–112 (TAGG…STSA). In terms of domain architecture, Peptidase M66 spans 233 to 501 (PVFGTDADVQ…QAWIASRVLA (269 aa)). Position 393 (His393) interacts with Zn(2+). Glu394 is an active-site residue. Positions 397 and 403 each coordinate Zn(2+).

This sequence belongs to the dictomallein family. Zn(2+) serves as cofactor.

The chain is Dictomallein (dtmL) from Burkholderia pseudomallei (strain 1710b).